Here is a 538-residue protein sequence, read N- to C-terminus: Bifunctional purine biosynthesis protein PurH (538 aa).

Residues 8-158 enclose the MGS-like domain; it reads FPIPDLHRVR…KNHVYTGVIT (151 aa).

It belongs to the PurH family.

It carries out the reaction (6R)-10-formyltetrahydrofolate + 5-amino-1-(5-phospho-beta-D-ribosyl)imidazole-4-carboxamide = 5-formamido-1-(5-phospho-D-ribosyl)imidazole-4-carboxamide + (6S)-5,6,7,8-tetrahydrofolate. The catalysed reaction is IMP + H2O = 5-formamido-1-(5-phospho-D-ribosyl)imidazole-4-carboxamide. It participates in purine metabolism; IMP biosynthesis via de novo pathway; 5-formamido-1-(5-phospho-D-ribosyl)imidazole-4-carboxamide from 5-amino-1-(5-phospho-D-ribosyl)imidazole-4-carboxamide (10-formyl THF route): step 1/1. It functions in the pathway purine metabolism; IMP biosynthesis via de novo pathway; IMP from 5-formamido-1-(5-phospho-D-ribosyl)imidazole-4-carboxamide: step 1/1. The protein is Bifunctional purine biosynthesis protein PurH of Bartonella henselae (strain ATCC 49882 / DSM 28221 / CCUG 30454 / Houston 1) (Rochalimaea henselae).